Consider the following 167-residue polypeptide: Arginine repressor (167 aa).

Belongs to the ArgR family.

The protein resides in the cytoplasm. It functions in the pathway amino-acid biosynthesis; L-arginine biosynthesis [regulation]. Regulates arginine biosynthesis genes. This is Arginine repressor from Mycobacterium leprae (strain Br4923).